Consider the following 211-residue polypeptide: MTSQKKAPIIIGVTGGSGSGKTTVSQAIAQKFANHSVMLLPQDAYYKHQDGSFEERQETNYDHPDAFDTDLLIEQATMLKNHQPIEQPVYDYKIHNRTDEVVHVEPQDVIILEGILVLADARLRDLMDIKVYVDTDDDIRLLRRMSRDMESRGRSFDDIVMQYLKTVKPMFHEFIEPTKRYADLIVPEGGNNRVAIDLLVTKIQSILNMND.

Position 15-22 (15-22) interacts with ATP; sequence GGSGSGKT.

The protein belongs to the uridine kinase family.

The protein localises to the cytoplasm. The catalysed reaction is uridine + ATP = UMP + ADP + H(+). It carries out the reaction cytidine + ATP = CMP + ADP + H(+). It participates in pyrimidine metabolism; CTP biosynthesis via salvage pathway; CTP from cytidine: step 1/3. The protein operates within pyrimidine metabolism; UMP biosynthesis via salvage pathway; UMP from uridine: step 1/1. The chain is Uridine kinase from Latilactobacillus sakei subsp. sakei (strain 23K) (Lactobacillus sakei subsp. sakei).